A 246-amino-acid polypeptide reads, in one-letter code: Ly6/PLAUR domain-containing protein 4 (246 aa).

The first 26 residues, 1–26, serve as a signal peptide directing secretion; sequence MGPQHLSPMQLLCLLGAISSLPWAEA. Residue asparagine 117 is glycosylated (N-linked (GlcNAc...) asparagine). One can recognise a UPAR/Ly6 domain in the interval 142–223; it reads CPTCVGEHSK…INIVEKALFT (82 aa). Alanine 225 is lipidated: GPI-anchor amidated alanine. The propeptide at 226–246 is removed in mature form; the sequence is GTPCRSPSWGILLGLLFAFKG.

It localises to the cell membrane. The sequence is that of Ly6/PLAUR domain-containing protein 4 (LYPD4) from Bos taurus (Bovine).